Consider the following 557-residue polypeptide: Leucine-rich glioma-inactivated protein 1 (557 aa).

An N-terminal signal peptide occupies residues Met-1–Gly-34. An LRRNT domain is found at Lys-35–Leu-72. LRR repeat units lie at residues Ser-92 to Gly-113, His-116 to Gly-137, and Ser-140 to Gly-161. In terms of domain architecture, LRRCT spans Asn-173–Ile-223. A glycan (N-linked (GlcNAc...) asparagine) is linked at Asn-192. EAR repeat units lie at residues Glu-225–His-267, Thr-271–Ser-313, Lys-317–Gly-364, Gly-366–Lys-415, Leu-419–Gly-462, Ser-464–Ala-506, and Lys-510–Ile-552. The N-linked (GlcNAc...) asparagine glycan is linked to Asn-277. Asn-422 carries N-linked (GlcNAc...) asparagine glycosylation.

Oligomer. Interacts with KCNA1 within a complex containing KCNA1, KCNA4 and KCNAB1. Part of a complex containing ADAM22, DLG4/PSD95 and CACNG2 (stargazin). Can bind to ADAM11 and ADAM23. Post-translationally, glycosylated.

The protein resides in the secreted. It localises to the synapse. Its subcellular location is the cytoplasm. Its function is as follows. Regulates voltage-gated potassium channels assembled from KCNA1, KCNA4 and KCNAB1. It slows down channel inactivation by precluding channel closure mediated by the KCNAB1 subunit. Ligand for ADAM22 that positively regulates synaptic transmission mediated by AMPA-type glutamate receptors. Plays a role in suppressing the production of MMP1/3 through the phosphatidylinositol 3-kinase/ERK pathway. This chain is Leucine-rich glioma-inactivated protein 1 (LGI1), found in Pongo abelii (Sumatran orangutan).